The sequence spans 89 residues: MAVVPLGEVRNRLSEYVAEVELTHERITITRHGHPAAVLISADDLASIEETLEVLRTPGASEAIREGLADVAAGRFVSNDEIRNRYTAR.

This sequence belongs to the phD/YefM antitoxin family. In terms of assembly, interacts with toxin RelE, which neutralizes its toxicity. Also interacts with toxins RelG and RelK in vitro, in M.smegmatis coexpression with non-cognate toxins neutralizes the toxicity of RelG while increasing the toxicity of RelK.

In terms of biological role, antitoxin component of a type II toxin-antitoxin (TA) system. Upon expression in M.smegmatis neutralizes the effect of toxin RelE. Its function is as follows. Induces its own promoter, in combination with RelE represses its own promoter. Binds DNA in complex with toxin RelE but not alone. The polypeptide is Antitoxin RelB (relB) (Mycobacterium tuberculosis (strain ATCC 25618 / H37Rv)).